The following is a 463-amino-acid chain: 23S rRNA (uracil(1939)-C(5))-methyltransferase RlmD (463 aa).

One can recognise a TRAM domain in the interval 6–76 (KSRKPQQPEY…KRLEEAEMVA (71 aa)). 4 residues coordinate [4Fe-4S] cluster: cysteine 90, cysteine 96, cysteine 99, and cysteine 178. Positions 288, 317, 322, 341, 368, and 389 each coordinate S-adenosyl-L-methionine. Residue cysteine 415 is the Nucleophile of the active site.

It belongs to the class I-like SAM-binding methyltransferase superfamily. RNA M5U methyltransferase family. RlmD subfamily.

The enzyme catalyses uridine(1939) in 23S rRNA + S-adenosyl-L-methionine = 5-methyluridine(1939) in 23S rRNA + S-adenosyl-L-homocysteine + H(+). In terms of biological role, catalyzes the formation of 5-methyl-uridine at position 1939 (m5U1939) in 23S rRNA. This chain is 23S rRNA (uracil(1939)-C(5))-methyltransferase RlmD, found in Acinetobacter baumannii (strain ACICU).